A 464-amino-acid polypeptide reads, in one-letter code: 3-deoxy-D-manno-octulosonic acid transferase (464 aa).

Residues 2–22 traverse the membrane as a helical; Signal-anchor segment; it reads MLLYYALSFILLPIYFIIILI. One can recognise an RPE1 insert domain in the interval 47–93; sequence YSLDFLHNEANKERFKGDTERRTAAYTSVREDSSTGSTSKLPLEASY. Residue Glu107 is the Proton acceptor of the active site. CMP is bound by residues 311–312, 352–354, and 377–380; these read PR, FGE, and NILE.

This sequence belongs to the glycosyltransferase group 1 family.

Its subcellular location is the cell inner membrane. It carries out the reaction lipid IVA (E. coli) + CMP-3-deoxy-beta-D-manno-octulosonate = alpha-Kdo-(2-&gt;6)-lipid IVA (E. coli) + CMP + H(+). Its pathway is bacterial outer membrane biogenesis; LPS core biosynthesis. Functionally, involved in lipopolysaccharide (LPS) biosynthesis. Catalyzes the transfer of 3-deoxy-D-manno-octulosonate (Kdo) residue(s) from CMP-Kdo to lipid IV(A), the tetraacyldisaccharide-1,4'-bisphosphate precursor of lipid A. The chain is 3-deoxy-D-manno-octulosonic acid transferase (waaA) from Rickettsia felis (strain ATCC VR-1525 / URRWXCal2) (Rickettsia azadi).